Reading from the N-terminus, the 250-residue chain is Leucyl/phenylalanyl-tRNA--protein transferase (250 aa).

Belongs to the L/F-transferase family.

It is found in the cytoplasm. The enzyme catalyses N-terminal L-lysyl-[protein] + L-leucyl-tRNA(Leu) = N-terminal L-leucyl-L-lysyl-[protein] + tRNA(Leu) + H(+). It catalyses the reaction N-terminal L-arginyl-[protein] + L-leucyl-tRNA(Leu) = N-terminal L-leucyl-L-arginyl-[protein] + tRNA(Leu) + H(+). It carries out the reaction L-phenylalanyl-tRNA(Phe) + an N-terminal L-alpha-aminoacyl-[protein] = an N-terminal L-phenylalanyl-L-alpha-aminoacyl-[protein] + tRNA(Phe). In terms of biological role, functions in the N-end rule pathway of protein degradation where it conjugates Leu, Phe and, less efficiently, Met from aminoacyl-tRNAs to the N-termini of proteins containing an N-terminal arginine or lysine. The sequence is that of Leucyl/phenylalanyl-tRNA--protein transferase from Xanthomonas oryzae pv. oryzae (strain MAFF 311018).